Reading from the N-terminus, the 118-residue chain is Large ribosomal subunit protein bL20 (118 aa).

Belongs to the bacterial ribosomal protein bL20 family.

In terms of biological role, binds directly to 23S ribosomal RNA and is necessary for the in vitro assembly process of the 50S ribosomal subunit. It is not involved in the protein synthesizing functions of that subunit. The chain is Large ribosomal subunit protein bL20 from Azotobacter vinelandii.